The primary structure comprises 85 residues: Phycobilisome 9.7 kDa linker polypeptide, phycocyanin-associated, rod (85 aa).

The 59-residue stretch at 16 to 74 (NRVFVYEVEGLRQNEQTDNNRYQIRNSSTIEIQVPYSRMNEEDRRITRLGGRIVNIRPA) folds into the CpcD-like domain.

The protein belongs to the phycobilisome linker protein family.

Its subcellular location is the cellular thylakoid membrane. Functionally, rod linker protein, associated with phycocyanin. Linker polypeptides determine the state of aggregation and the location of the disk-shaped phycobiliprotein units within the phycobilisome and modulate their spectroscopic properties in order to mediate a directed and optimal energy transfer. The chain is Phycobilisome 9.7 kDa linker polypeptide, phycocyanin-associated, rod (cpcD2) from Microchaete diplosiphon (Fremyella diplosiphon).